The sequence spans 149 residues: Ribosome-binding factor A (149 aa).

A disordered region spans residues Ala124–Glu149.

The protein belongs to the RbfA family. In terms of assembly, monomer. Binds 30S ribosomal subunits, but not 50S ribosomal subunits or 70S ribosomes.

It is found in the cytoplasm. One of several proteins that assist in the late maturation steps of the functional core of the 30S ribosomal subunit. Associates with free 30S ribosomal subunits (but not with 30S subunits that are part of 70S ribosomes or polysomes). Required for efficient processing of 16S rRNA. May interact with the 5'-terminal helix region of 16S rRNA. This is Ribosome-binding factor A from Corynebacterium glutamicum (strain R).